Here is a 495-residue protein sequence, read N- to C-terminus: Germacrene A acid 8-beta-hydroxylase (495 aa).

The chain crosses the membrane as a helical; Signal-anchor for type II membrane protein span at residues 3–23 (PFTTFSLVASSLILLICWALV). The N-linked (GlcNAc...) asparagine glycan is linked to asparagine 103. A heme-binding site is contributed by cysteine 433.

The protein belongs to the cytochrome P450 family. Heme is required as a cofactor. In terms of tissue distribution, mostly expressed in leaves and flowers, and, to a lower extent, in roots and stems.

It localises to the membrane. It catalyses the reaction germacra-1(10),4,11(13)-trien-12-oate + reduced [NADPH--hemoprotein reductase] + O2 = 8beta-hydroxygermacra-1(10),4,11(13)-trien-12-oate + oxidized [NADPH--hemoprotein reductase] + H2O + H(+). The catalysed reaction is germacra-1(10),4,11(13)-trien-12-oate + reduced [NADPH--hemoprotein reductase] + O2 = 8-epi-inunolide + oxidized [NADPH--hemoprotein reductase] + 2 H2O. It carries out the reaction germacra-1(10),4,11(13)-trien-12-oate + reduced [NADPH--hemoprotein reductase] + O2 = 8alpha-hydroxygermacra-1(10),4,11(13)-trien-12-oate + oxidized [NADPH--hemoprotein reductase] + H2O + H(+). Its pathway is secondary metabolite biosynthesis; terpenoid biosynthesis. Involved in the biosynthesis of germacrene-derived sesquiterpene lactones. Hydroxylates germacrene A acid to 8-beta-hydroxy-germacrene A and 8-alpha-hydroxy-germacrene A acids. Unlike 8-alpha-hydroxy-germacrene A acid with is spontaneously converted into inunolide (12, 8-alpha), 8-beta-hydroxy-germacrene A cannot undergo spontaneous lactonization. In Inula hupehensis (Inula helianthus-aquatilis subsp. hupehensis), this protein is Germacrene A acid 8-beta-hydroxylase.